A 480-amino-acid chain; its full sequence is Oxysterol-binding protein-related protein 2 (480 aa).

A disordered region spans residues 1 to 60 (MNGEEEFFDAVTGFDSDNSSGEFSEANQKVTGMIDLDTSKNNRIGKTGERPSQENGIQKH). A compositionally biased stretch (polar residues) spans 15–30 (DSDNSSGEFSEANQKV). S19 and S20 each carry phosphoserine. A 1,2-diacyl-sn-glycero-3-phospho-(1D-myo-inositol-4,5-bisphosphate) contacts are provided by residues K90, 178 to 179 (HH), and 427 to 431 (EEKQR).

Belongs to the OSBP family. In terms of assembly, monomer. Homotetramer; phosphatidylinositol-4,5-bisphosphate binding promotes formation of stable tetramers. Interacts with DIAPH1. As to expression, widely expressed.

The protein resides in the cytoplasm. The protein localises to the cytosol. It is found in the lipid droplet. Its subcellular location is the cell membrane. In terms of biological role, intracellular transport protein that binds sterols and phospholipids and mediates lipid transport between intracellular compartments. Increases plasma membrane cholesterol levels and decreases phosphatidylinositol-4,5-bisphosphate levels in the cell membrane. Binds phosphoinositides, such as phosphatidylinositol-4,5-bisphosphate. Exhibits strong binding to phosphatidic acid and weak binding to phosphatidylinositol 3-phosphate. Binds cholesterol, dehydroergosterol, 22(R)-hydroxycholesterol and 25-hydroxycholesterol (in vitro). The protein is Oxysterol-binding protein-related protein 2 (OSBPL2) of Homo sapiens (Human).